Consider the following 309-residue polypeptide: tRNA dimethylallyltransferase (309 aa).

Gly-11–Ser-18 is a binding site for ATP. Thr-13–Ser-18 serves as a coordination point for substrate. Interaction with substrate tRNA regions lie at residues Asp-36–Gln-39 and Gln-160–Arg-164.

The protein belongs to the IPP transferase family. Monomer. It depends on Mg(2+) as a cofactor.

The enzyme catalyses adenosine(37) in tRNA + dimethylallyl diphosphate = N(6)-dimethylallyladenosine(37) in tRNA + diphosphate. Catalyzes the transfer of a dimethylallyl group onto the adenine at position 37 in tRNAs that read codons beginning with uridine, leading to the formation of N6-(dimethylallyl)adenosine (i(6)A). The polypeptide is tRNA dimethylallyltransferase (Caulobacter sp. (strain K31)).